The chain runs to 211 residues: Thiamine-phosphate synthase (211 aa).

4-amino-2-methyl-5-(diphosphooxymethyl)pyrimidine is bound by residues 37–41 (QLRIK) and Asn69. Asp70 and Asp89 together coordinate Mg(2+). 4-amino-2-methyl-5-(diphosphooxymethyl)pyrimidine is bound at residue Ser108. 134–136 (TQT) provides a ligand contact to 2-[(2R,5Z)-2-carboxy-4-methylthiazol-5(2H)-ylidene]ethyl phosphate. A 4-amino-2-methyl-5-(diphosphooxymethyl)pyrimidine-binding site is contributed by Lys137. 2-[(2R,5Z)-2-carboxy-4-methylthiazol-5(2H)-ylidene]ethyl phosphate contacts are provided by residues Gly166 and 186 to 187 (VS).

Belongs to the thiamine-phosphate synthase family. It depends on Mg(2+) as a cofactor.

It catalyses the reaction 2-[(2R,5Z)-2-carboxy-4-methylthiazol-5(2H)-ylidene]ethyl phosphate + 4-amino-2-methyl-5-(diphosphooxymethyl)pyrimidine + 2 H(+) = thiamine phosphate + CO2 + diphosphate. It carries out the reaction 2-(2-carboxy-4-methylthiazol-5-yl)ethyl phosphate + 4-amino-2-methyl-5-(diphosphooxymethyl)pyrimidine + 2 H(+) = thiamine phosphate + CO2 + diphosphate. The enzyme catalyses 4-methyl-5-(2-phosphooxyethyl)-thiazole + 4-amino-2-methyl-5-(diphosphooxymethyl)pyrimidine + H(+) = thiamine phosphate + diphosphate. Its pathway is cofactor biosynthesis; thiamine diphosphate biosynthesis; thiamine phosphate from 4-amino-2-methyl-5-diphosphomethylpyrimidine and 4-methyl-5-(2-phosphoethyl)-thiazole: step 1/1. Its function is as follows. Condenses 4-methyl-5-(beta-hydroxyethyl)thiazole monophosphate (THZ-P) and 2-methyl-4-amino-5-hydroxymethyl pyrimidine pyrophosphate (HMP-PP) to form thiamine monophosphate (TMP). The chain is Thiamine-phosphate synthase from Shigella sonnei (strain Ss046).